A 375-amino-acid chain; its full sequence is Pectate lyase 1 (375 aa).

Positions 1–21 (MASCTLLAVLVFLCAIVSCFS) are cleaved as a signal peptide. C28 and C45 are oxidised to a cystine. N110 carries N-linked (GlcNAc...) asparagine glycosylation. Cysteines 128 and 147 form a disulfide. The N-linked (GlcNAc...) asparagine glycan is linked to N148. D170 serves as a coordination point for Ca(2+). The N-linked (GlcNAc...) asparagine glycan is linked to N178. Ca(2+) is bound by residues D194 and D198. The active site involves R250. The N-linked (GlcNAc...) asparagine glycan is linked to N293. Residues C306 and C312 are joined by a disulfide bond. N352 is a glycosylation site (N-linked (GlcNAc...) asparagine).

The protein belongs to the polysaccharide lyase 1 family. Amb a subfamily. Ca(2+) serves as cofactor.

The enzyme catalyses Eliminative cleavage of (1-&gt;4)-alpha-D-galacturonan to give oligosaccharides with 4-deoxy-alpha-D-galact-4-enuronosyl groups at their non-reducing ends.. Its pathway is glycan metabolism; pectin degradation; 2-dehydro-3-deoxy-D-gluconate from pectin: step 2/5. Has pectate lyase activity. This chain is Pectate lyase 1, found in Chamaecyparis obtusa (Hinoki false-cypress).